Reading from the N-terminus, the 57-residue chain is Small ribosomal subunit protein eS27 (57 aa).

Zn(2+)-binding residues include cysteine 10, cysteine 13, cysteine 29, and cysteine 32. Residues 10 to 32 (CPDCENEQSLFEKAASEVSCAVC) form a C4-type zinc finger.

The protein belongs to the eukaryotic ribosomal protein eS27 family. In terms of assembly, part of the 30S ribosomal subunit. Zn(2+) serves as cofactor.

This Haloarcula marismortui (strain ATCC 43049 / DSM 3752 / JCM 8966 / VKM B-1809) (Halobacterium marismortui) protein is Small ribosomal subunit protein eS27.